The sequence spans 421 residues: Prenyltransferase asqH2 (421 aa).

The disordered stretch occupies residues 1–28; sequence MDRNSFTAYGPATGAITESGEQENDHTK. Glu105 contacts L-tryptophan. Residues Arg119, Arg272, Lys274, Tyr276, and Tyr341 each coordinate substrate.

It belongs to the tryptophan dimethylallyltransferase family.

The enzyme catalyses yaequinolone E + dimethylallyl diphosphate + H2O = [(1'E)-3'-hydroxy-3',7'-dimethylocta-1',6'-dien-1'-yl]-quinolinone B + diphosphate. It functions in the pathway secondary metabolite biosynthesis. The protein operates within alkaloid biosynthesis. It participates in mycotoxin biosynthesis. Its function is as follows. Prenyltransferase; part of the gene cluster that mediates the biosynthesis of the aspoquinolone mycotoxins. Within the pathway, the prenyltransferase asqH2 performs the second alkylation with DMAPP at delta(3') double bond to yield a carbenium ion intermediate, which can be attacked by H(2)O to yield a styrenyl quinolone containing a C3'-hydroxyprenyl chain. The first step of the pathway is catalyzed by the nonribosomal peptide synthetase asqK that condenses anthranilic acid and O-methyl-L-tyrosine to produce 4'-methoxycyclopeptin. 4'-methoxycyclopeptin is then converted to 4'-methoxydehydrocyclopeptin by the ketoglutarate-dependent dioxygenase asqJ. AsqJ also converts its first product 4'-methoxydehydrocyclopeptin to 4'-methoxycyclopenin. The following conversion of 4'-methoxycyclopenin into 4'-methoxyviridicatin is catalyzed by the cyclopenase asqI. 4'-methoxyviridicatin is the precursor of quinolone natural products, and is further converted to quinolinone B. The prenyltransferase asqH1 then catalyzes the canonical Friedel-Crafts alkylation of quinolinone B with dimethylallyl cation to yield dimethylallyl quinolone, which is subjected to FAD-dependent dehydrogenation by the FAD-linked oxidoreductase asqF to yield conjugated aryl diene. The delta(3') double bond then serves as the site of the second alkylation with DMAPP catalyzed by the prenyltransferase asqH2 to yield a carbenium ion intermediate, which can be attacked by H(2)O to yield a styrenyl quinolone containing a C3'-hydroxyprenyl chain. The FAD-dependent monooxygenase asqG performs epoxidation of the terminal C7'-C8' olefin. Finally, after dehydratation of the epoxide at C3 by asqC, the quinolone epoxide rearrangement protein asqO catalyzes an enzymatic 3-exo-tet cyclization to yield the cyclopropyl-THF ring system in aspoquinolone. In Emericella nidulans (strain FGSC A4 / ATCC 38163 / CBS 112.46 / NRRL 194 / M139) (Aspergillus nidulans), this protein is Prenyltransferase asqH2.